We begin with the raw amino-acid sequence, 397 residues long: Phosphoglycerate kinase (397 aa).

Substrate-binding positions include 21-23, Arg-37, 60-63, Arg-119, and Arg-152; these read DFN and HLGR. Residues Lys-203, Gly-294, Glu-325, and 354–357 each bind ATP; that span reads GGDS.

Belongs to the phosphoglycerate kinase family. As to quaternary structure, monomer.

The protein resides in the cytoplasm. The enzyme catalyses (2R)-3-phosphoglycerate + ATP = (2R)-3-phospho-glyceroyl phosphate + ADP. The protein operates within carbohydrate degradation; glycolysis; pyruvate from D-glyceraldehyde 3-phosphate: step 2/5. This chain is Phosphoglycerate kinase, found in Chlorobium chlorochromatii (strain CaD3).